Here is a 699-residue protein sequence, read N- to C-terminus: eEF1A lysine and N-terminal methyltransferase (699 aa).

Met-1 is modified (N-acetylmethionine). Phosphoserine is present on Ser-267. The tract at residues 433 to 459 (VSHKAQKKRKKDRKKQRPADAEDLPAA) is disordered. Residues 436–448 (KAQKKRKKDRKKQ) show a composition bias toward basic residues.

It belongs to the methyltransferase superfamily. Forms a tripartite complex containing GAB1, METTL13 and SPRY2. Within the complex interacts with GAB1 and SPRY2.

Its subcellular location is the cytoplasm. It is found in the nucleus. The protein resides in the mitochondrion. It catalyses the reaction L-lysyl-[protein] + S-adenosyl-L-methionine = N(6)-methyl-L-lysyl-[protein] + S-adenosyl-L-homocysteine + H(+). It carries out the reaction N(6)-methyl-L-lysyl-[protein] + S-adenosyl-L-methionine = N(6),N(6)-dimethyl-L-lysyl-[protein] + S-adenosyl-L-homocysteine + H(+). The catalysed reaction is N-terminal glycyl-L-lysyl-L-glutamyl-[protein] + 3 S-adenosyl-L-methionine = N-terminal N,N,N-trimethyl-glycyl-L-lysyl-L-glutamyl-[protein] + 3 S-adenosyl-L-homocysteine + 3 H(+). Protein N-terminal methyltransferase activity is inhibited by GTP and GDP. Dual methyltransferase that catalyzes methylation of elongation factor 1-alpha (EEF1A1 and EEF1A2) at two different positions, and is therefore involved in the regulation of mRNA translation. Via its C-terminus, methylates EEF1A1 and EEF1A2 at the N-terminal residue 'Gly-2'. Via its N-terminus dimethylates EEF1A1 and EEF1A2 at residue 'Lys-55'. Has no activity towards core histones H2A, H2B, H3 and H4. This is eEF1A lysine and N-terminal methyltransferase from Homo sapiens (Human).